Consider the following 287-residue polypeptide: MAAITAALVKELRERTGEGMMDCKKALEKAGGDIEKAIDDMRASGAIKAAKKAGNVAAEGAIAVKTDGKSAVLLEVNSQTDFLALQDDFKNFVAESLEEAFAQKLTDAAPLIASREAAREALVAKCGENVNIRRLVRVEGDVVGAYLHGNKIGAVVVLKGGDVELAKNIAMHVAASNPEFLDASEISAEAIEREKNVFLQLNADKIAGKPGNIVENMINGRITKFKAEASLKEQAFVMNPEVKVGELAKKAGAEIVSFTYFKVGEGIEKPVDDFAAEVAAQVAAAKQ.

An involved in Mg(2+) ion dislocation from EF-Tu region spans residues 80–83 (TDFL).

Belongs to the EF-Ts family.

The protein localises to the cytoplasm. Its function is as follows. Associates with the EF-Tu.GDP complex and induces the exchange of GDP to GTP. It remains bound to the aminoacyl-tRNA.EF-Tu.GTP complex up to the GTP hydrolysis stage on the ribosome. The chain is Elongation factor Ts from Pseudomonas putida (strain W619).